We begin with the raw amino-acid sequence, 512 residues long: MKSFLLLFLLFVTFSSALPADQKMENEENMQLAQAYLNQFYSLEIEGSHLVQSKNGSLLDGKIREMQAFFGLTVTGTLDSNTLEIMKTPRCGVPDVGQYGYTLPGWRKYNLTYRIMNYTPDMARADVDEAIQKALEVWSKVTPLTFTKIFKGIADIMIAFRTRVHGRCPRYFDGPLGVLGHAFPPGLGLGGDTHFDEDENWTKDTAGFSLFLVAAHEFGHALGLSHSNDQTALMFPNYVSLDPSKYPLSQDDIDGIQSIYGGLPTTPSKPKGPKIPHACDPDLTFDAITNIRREVMFFKGRHLWRIYHDITDVEFELIASFWPSLPADLQAAYENPRDKILVFKDENFWMIGAYNVLPRYPRSIHILGFPRYVKKIDAAVCDQDTRKTYFFVGIWCWRYDEMTRTMDRGYPQRIVRHFPGIGLRVDAAFQHKGFFYFFRGSKQFEYDIKAKSITRIMRTNTWFQCKEPLNSSLDFHFNQEKAYSGEVETLHHQSLSLLIFGIVHLLNKICSY.

The N-terminal stretch at 1–17 (MKSFLLLFLLFVTFSSA) is a signal peptide. Residues 18–98 (LPADQKMENE…PRCGVPDVGQ (81 aa)) constitute a propeptide, activation peptide. The short motif at 89 to 96 (PRCGVPDV) is the Cysteine switch element. Cys91 is a Zn(2+) binding site. N-linked (GlcNAc...) asparagine glycosylation occurs at Asn110. Ca(2+) is bound by residues Asp121 and Asp155. Residue His165 coordinates Zn(2+). Ca(2+) contacts are provided by Asp173, Gly174, and Val178. His181 is a Zn(2+) binding site. Gly188 and Asp192 together coordinate Ca(2+). His194 is a binding site for Zn(2+). Residues Asp196 and Glu199 each coordinate Ca(2+). His216 provides a ligand contact to Zn(2+). The active site involves Glu217. Residues His220 and His226 each contribute to the Zn(2+) site. Hemopexin repeat units lie at residues 276 to 325 (PHAC…WPSL), 326 to 371 (PADL…GFPR), 373 to 421 (VKKI…FPGI), and 422 to 465 (GLRV…WFQC). Residues Cys279 and Cys465 are joined by a disulfide bond. Asp286 serves as a coordination point for Ca(2+). Ca(2+) contacts are provided by Asp377 and Asp426. The segment at 466–512 (KEPLNSSLDFHFNQEKAYSGEVETLHHQSLSLLIFGIVHLLNKICSY) is required for retention in the endoplasmic reticulum.

It belongs to the peptidase M10A family. Requires Ca(2+) as cofactor. Zn(2+) is required as a cofactor. N-glycosylated.

Its subcellular location is the endoplasmic reticulum. Matrix metalloproteinases degrade protein components of the extracellular matrix such as fibronectin, laminin, gelatins and/or collagens. This is Matrix metalloproteinase-27 (MMP27) from Tupaia belangeri (Common tree shrew).